A 633-amino-acid polypeptide reads, in one-letter code: Pesticidal crystal protein Cry2Ab (633 aa).

The protein belongs to the delta endotoxin family.

Functionally, promotes colloidosmotic lysis by binding to the midgut epithelial cells of lepidopteran (Manduca sexta) larvae. The protein is Pesticidal crystal protein Cry2Ab (cry2Ab) of Bacillus thuringiensis subsp. kurstaki.